A 613-amino-acid polypeptide reads, in one-letter code: MPKYRSATTTHGRNMAGARALWRATGVKDEDFGKPIIAVVNSFTQFVPGHVHLKDLGQLVAQEIEAAGGIAKEFNTIAVDDGIAMGHGGMLYSLPSRELIADSVEYMVNAHCADAMVCISNCDKITPGMLMASMRLNIPVIFVSGGPMEAGKTKLSDQIIKLDLVDAMIQGADPKVSDEQSEQIERSACPTCGSCSGMFTANSMNCLTEALGLSQPGNGSLLATHADRKELFINAGKRIVELTKRYYEQDDETALPRNIATKAAFENAMALDIAMGGSTNTVLHLLAAAQEGEVDFDMTDIDRMSRQVPHLCKVAPSTQKYHMEDVHRAGGVVGILGELNRAGLLHNQSKTVLGLTWEEQLAKYDIMLTDSEEVKSFYRAGPAGIRTTQAFSQDCRWDTLDDDRAEGCIRTKENAFSQDGGLAVLKGNIALDGCIVKTAGVDESILKFTGPAVVFESQEDAVDGILGGKVKAGDVVVIRYEGPKGGPGMQEMLYPTTYLKSMGLGKECALLTDGRFSGGTSGLSIGHASPEAANGGAIGLVQDGDLIAIDIPNRSISLEISEQELAERRVKQDELGWKPANRQREVSFALKAYASMATSADKGAVRDKSKLEG.

D81 is a binding site for Mg(2+). Position 122 (C122) interacts with [2Fe-2S] cluster. Mg(2+) contacts are provided by D123 and K124. At K124 the chain carries N6-carboxylysine. C195 lines the [2Fe-2S] cluster pocket. E491 contacts Mg(2+). S517 serves as the catalytic Proton acceptor.

Belongs to the IlvD/Edd family. As to quaternary structure, homodimer. [2Fe-2S] cluster is required as a cofactor. The cofactor is Mg(2+).

The catalysed reaction is (2R)-2,3-dihydroxy-3-methylbutanoate = 3-methyl-2-oxobutanoate + H2O. It catalyses the reaction (2R,3R)-2,3-dihydroxy-3-methylpentanoate = (S)-3-methyl-2-oxopentanoate + H2O. The protein operates within amino-acid biosynthesis; L-isoleucine biosynthesis; L-isoleucine from 2-oxobutanoate: step 3/4. Its pathway is amino-acid biosynthesis; L-valine biosynthesis; L-valine from pyruvate: step 3/4. Its function is as follows. Functions in the biosynthesis of branched-chain amino acids. Catalyzes the dehydration of (2R,3R)-2,3-dihydroxy-3-methylpentanoate (2,3-dihydroxy-3-methylvalerate) into 2-oxo-3-methylpentanoate (2-oxo-3-methylvalerate) and of (2R)-2,3-dihydroxy-3-methylbutanoate (2,3-dihydroxyisovalerate) into 2-oxo-3-methylbutanoate (2-oxoisovalerate), the penultimate precursor to L-isoleucine and L-valine, respectively. The polypeptide is Dihydroxy-acid dehydratase (Vibrio parahaemolyticus serotype O3:K6 (strain RIMD 2210633)).